A 328-amino-acid polypeptide reads, in one-letter code: Tetraacyldisaccharide 4'-kinase (328 aa).

55–62 (TAGGNGKT) serves as a coordination point for ATP.

This sequence belongs to the LpxK family.

The catalysed reaction is a lipid A disaccharide + ATP = a lipid IVA + ADP + H(+). It functions in the pathway glycolipid biosynthesis; lipid IV(A) biosynthesis; lipid IV(A) from (3R)-3-hydroxytetradecanoyl-[acyl-carrier-protein] and UDP-N-acetyl-alpha-D-glucosamine: step 6/6. Transfers the gamma-phosphate of ATP to the 4'-position of a tetraacyldisaccharide 1-phosphate intermediate (termed DS-1-P) to form tetraacyldisaccharide 1,4'-bis-phosphate (lipid IVA). The polypeptide is Tetraacyldisaccharide 4'-kinase (Escherichia coli (strain K12 / MC4100 / BW2952)).